The chain runs to 119 residues: Large ribosomal subunit protein uL18 (119 aa).

The tract at residues 1 to 25 (MITKIDKNKVRKKRHARVRSKISGT) is disordered. Residues 9-20 (KVRKKRHARVRS) show a composition bias toward basic residues.

Belongs to the universal ribosomal protein uL18 family. Part of the 50S ribosomal subunit; part of the 5S rRNA/L5/L18/L25 subcomplex. Contacts the 5S and 23S rRNAs.

This is one of the proteins that bind and probably mediate the attachment of the 5S RNA into the large ribosomal subunit, where it forms part of the central protuberance. The protein is Large ribosomal subunit protein uL18 of Listeria monocytogenes serotype 4b (strain CLIP80459).